The primary structure comprises 491 residues: Glycogen synthase (491 aa).

Lys15 is a binding site for ADP-alpha-D-glucose.

Belongs to the glycosyltransferase 1 family. Bacterial/plant glycogen synthase subfamily.

It carries out the reaction [(1-&gt;4)-alpha-D-glucosyl](n) + ADP-alpha-D-glucose = [(1-&gt;4)-alpha-D-glucosyl](n+1) + ADP + H(+). Its pathway is glycan biosynthesis; glycogen biosynthesis. Functionally, synthesizes alpha-1,4-glucan chains using ADP-glucose. The protein is Glycogen synthase of Treponema denticola (strain ATCC 35405 / DSM 14222 / CIP 103919 / JCM 8153 / KCTC 15104).